Here is a 498-residue protein sequence, read N- to C-terminus: Protein flp (498 aa).

4 helical membrane-spanning segments follow: residues 6 to 26 (LYFLSISIIILVAISIAIYIT), 389 to 409 (FNIVTVLMTTLILLAFIFSAY), 433 to 453 (LTLCLCIAIALILYALPYLIL), and 471 to 491 (LALITTLIALFSTLIVILLFL).

The protein localises to the cell membrane. In terms of biological role, its precise function is unknown. Has no penicillin-binding activity and is not involved in methicillin resistance. The protein is Protein flp (flp) of Staphylococcus aureus (strain Mu50 / ATCC 700699).